A 768-amino-acid chain; its full sequence is DNA replication licensing factor MCM3 homolog 3 (768 aa).

The MCM domain maps to 290-497; that stretch reads TFDLLGNSLA…IDRQISEHVA (208 aa). 340–347 contributes to the ATP binding site; that stretch reads GDPSVAKS. Residues 472-475 carry the Arginine finger motif; sequence SRFD. The span at 661 to 670 shows a compositional bias: basic and acidic residues; that stretch reads EMKQQADHDA. Positions 661 to 690 are disordered; sequence EMKQQADHDAGATGGTVDGHGSSGNDPMDV. Gly residues predominate over residues 672–682; sequence ATGGTVDGHGS.

This sequence belongs to the MCM family.

Its subcellular location is the nucleus. The catalysed reaction is ATP + H2O = ADP + phosphate + H(+). Acts as a factor that allows the DNA to undergo a single round of replication per cell cycle. Required for DNA replication and cell proliferation. May act as a component of the MCM complex which is the putative replicative helicase of the replication licensing system in eukaryotic cells. In Zea mays (Maize), this protein is DNA replication licensing factor MCM3 homolog 3 (ROA3).